A 99-amino-acid polypeptide reads, in one-letter code: Nucleoid-associated protein Cj1642 (99 aa).

The protein belongs to the YbaB/EbfC family. Homodimer.

It is found in the cytoplasm. The protein resides in the nucleoid. Functionally, binds to DNA and alters its conformation. May be involved in regulation of gene expression, nucleoid organization and DNA protection. This Campylobacter jejuni subsp. jejuni serotype O:2 (strain ATCC 700819 / NCTC 11168) protein is Nucleoid-associated protein Cj1642.